The primary structure comprises 284 residues: Tryptophan 2,3-dioxygenase (284 aa).

Substrate is bound by residues 53–57 (FIVQH), Y115, and R119. H242 is a heme binding site. Substrate is bound at residue T256.

This sequence belongs to the tryptophan 2,3-dioxygenase family. Homotetramer. Heme serves as cofactor.

The enzyme catalyses L-tryptophan + O2 = N-formyl-L-kynurenine. It functions in the pathway amino-acid degradation; L-tryptophan degradation via kynurenine pathway; L-kynurenine from L-tryptophan: step 1/2. Heme-dependent dioxygenase that catalyzes the oxidative cleavage of the L-tryptophan (L-Trp) pyrrole ring and converts L-tryptophan to N-formyl-L-kynurenine. Catalyzes the oxidative cleavage of the indole moiety. The polypeptide is Tryptophan 2,3-dioxygenase (Bordetella parapertussis (strain 12822 / ATCC BAA-587 / NCTC 13253)).